Consider the following 457-residue polypeptide: Dihydrolipoyl dehydrogenase (457 aa).

Residues glutamate 32–cysteine 40, lysine 49, and alanine 113 each bind FAD. Cysteines 40 and 45 form a disulfide. NAD(+)-binding positions include glycine 178–isoleucine 182, valine 235, and serine 262–arginine 265. 2 residues coordinate FAD: aspartate 303 and alanine 311. The active-site Proton acceptor is the histidine 437.

The protein belongs to the class-I pyridine nucleotide-disulfide oxidoreductase family. As to quaternary structure, homodimer. It depends on FAD as a cofactor.

The protein localises to the cytoplasm. The enzyme catalyses N(6)-[(R)-dihydrolipoyl]-L-lysyl-[protein] + NAD(+) = N(6)-[(R)-lipoyl]-L-lysyl-[protein] + NADH + H(+). Lipoamide dehydrogenase is a component of the alpha-ketoacid dehydrogenase complexes. This chain is Dihydrolipoyl dehydrogenase (pdhD), found in Mycoplasma pneumoniae (strain ATCC 29342 / M129 / Subtype 1) (Mycoplasmoides pneumoniae).